A 688-amino-acid chain; its full sequence is Soluble guanylate cyclase gcy-35 (688 aa).

His-105 contacts heme. Residues 358–401 (LNQSRMSQVELNRTLEETTKKLKKMAQELEIEKQKTDELLCELM) adopt a coiled-coil conformation. One can recognise a Guanylate cyclase domain in the interval 424–552 (TLLFTDIVTF…DTVNVANKME (129 aa)). Positions 429 and 473 each coordinate Mg(2+). The tract at residues 644–688 (VENGNSAQNNHNNNNNTHHSGRKLMNGSSVDPGSHHIRSPTCTIS) is disordered. Residues 646-659 (NGNSAQNNHNNNNN) are compositionally biased toward low complexity.

This sequence belongs to the adenylyl cyclase class-4/guanylyl cyclase family. As to quaternary structure, heterodimer; heterodimerizes with gcy-36, and possibly with other soluble guanylate cyclases. Heme serves as cofactor. As to expression, expressed in URX, AQR and PQR neurons. Also expressed in ALN, SDQ and BDU neurons, and variably in AVM, PLM and PLN neurons, pharyngeal and body wall muscles, and the excretory cell.

It localises to the cytoplasm. It is found in the cell projection. The protein resides in the dendrite. The catalysed reaction is GTP = 3',5'-cyclic GMP + diphosphate. With respect to regulation, regulated by molecular oxygen, which binds to the heme binding site. Probably not activated by nitric oxide (NO). Plays a central role in social feeding behavior and oxygen sensation by synthesizing 3',5'-cyclic guanosine monophosphate (cGMP) from GTP. Oxygen, which binds to its heme-binding sites, probably regulates social behavior by modulating its activity. cGMP is a common second messenger in sensory transduction and is implicated in oxygen sensation. Indeed, C.elegans exhibits a strong behavioral preference for 5-12% oxygen, avoiding higher and lower oxygen levels; a higher level of oxygen inducing a naturally polymorphic social feeding behavior. Involved in avoidance of hyperoxia and for oxygen-induced aggregation and bordering, probably by mediating oxygen-sensing in URX, AQR and PQR sensory neurons. The polypeptide is Soluble guanylate cyclase gcy-35 (gcy-35) (Caenorhabditis elegans).